The chain runs to 1671 residues: Kinesin-like protein unc-104 (1671 aa).

Residues 3–351 (SVKVAVRVRP…LRYADRAKQI (349 aa)) form the Kinesin motor domain. 97-104 (GQTGAGKS) lines the ATP pocket. Residues 358–437 (NEDANAKLIR…IAELNETWEE (80 aa)) adopt a coiled-coil conformation. The tract at residues 391–413 (DELNKSTTGIKSPSKSRNRNGST) is disordered. Polar residues predominate over residues 395–413 (KSTTGIKSPSKSRNRNGST). One can recognise an FHA domain in the interval 500 to 566 (TRLGTHEANV…LKTGSRVILG (67 aa)). Residues 577-674 (EQARELREKI…EEQSMTMSMY (98 aa)) adopt a coiled-coil conformation. Residues 949 to 973 (DVDSGRGIDSNSASDCPENAEEPGE) are disordered. In terms of domain architecture, PH spans 1538 to 1636 (VVARKGLLNV…WLYAINPLLA (99 aa)).

The protein belongs to the TRAFAC class myosin-kinesin ATPase superfamily. Kinesin family. Unc-104 subfamily. Monomer.

The protein resides in the cytoplasm. Its subcellular location is the cytoskeleton. Required for presynaptic maturation, has a role in axonal transport of dense-core vesicles carrying synaptic vesicle precursors, components required for the morphological transformation of axonal growth cones to mature boutons. In Drosophila pseudoobscura pseudoobscura (Fruit fly), this protein is Kinesin-like protein unc-104.